A 278-amino-acid polypeptide reads, in one-letter code: Nucleotide-binding protein Tlet_0523 (278 aa).

Residue 9-16 coordinates ATP; the sequence is GLSGAGKS. 58–61 is a binding site for GTP; it reads DIRS.

It belongs to the RapZ-like family.

Displays ATPase and GTPase activities. This is Nucleotide-binding protein Tlet_0523 from Pseudothermotoga lettingae (strain ATCC BAA-301 / DSM 14385 / NBRC 107922 / TMO) (Thermotoga lettingae).